The following is a 1097-amino-acid chain: Platelet-derived growth factor receptor beta (1097 aa).

An N-terminal signal peptide occupies residues 1 to 31 (MGLPEVMPASVLRGQLLLFVLLLLGPQISQG). Ig-like C2-type domains lie at 32–119 (LVIT…YIFV), 128–209 (PMDS…YSLQ), and 213–308 (INVS…INVT). Over 32 to 531 (LVITPPGPEF…VVPHSLPFKV (500 aa)) the chain is Extracellular. N-linked (GlcNAc...) asparagine glycosylation is found at Asn-44, Asn-88, and Asn-102. A disulfide bond links Cys-53 and Cys-99. A disulfide bridge links Cys-148 with Cys-189. A glycan (N-linked (GlcNAc...) asparagine) is linked at Asn-214. Cysteines 234 and 290 form a disulfide. N-linked (GlcNAc...) asparagine glycosylation is found at Asn-291, Asn-306, Asn-353, Asn-370, Asn-444, Asn-467, and Asn-478. The 109-residue stretch at 415–523 (PVRVLELSES…GRDSQEVTVV (109 aa)) folds into the Ig-like C2-type 4 domain. An intrachain disulfide couples Cys-435 to Cys-507. The chain crosses the membrane as a helical span at residues 532 to 552 (VVISAILALVVLTVISLIILI). The Cytoplasmic portion of the chain corresponds to 553-1097 (MLWQRKPRYE…PLAEAEDSFL (545 aa)). Tyr-561, Tyr-578, and Tyr-580 each carry phosphotyrosine; by autocatalysis. Positions 599–961 (LVLGRTLGSG…QLVLLLERLL (363 aa)) constitute a Protein kinase domain. Residues 605-613 (LGSGAFGQV) and Lys-633 each bind ATP. Tyr-685 carries the phosphotyrosine; by ABL1 and ABL2 modification. A phosphotyrosine; by autocatalysis mark is found at Tyr-715, Tyr-739, Tyr-750, Tyr-762, Tyr-770, Tyr-774, and Tyr-777. The active-site Proton acceptor is the Asp-825. Tyr-856 carries the phosphotyrosine; by autocatalysis modification. Residues Tyr-933 and Tyr-969 each carry the phosphotyrosine; by ABL1 and ABL2 modification. Residues Tyr-1008 and Tyr-1020 each carry the phosphotyrosine; by autocatalysis modification. The segment at 1016-1097 (TDNDYIIPLP…PLAEAEDSFL (82 aa)) is disordered. Residues 1042–1059 (SLASSTLNEVNTSSTISC) show a composition bias toward polar residues. The span at 1072–1081 (EPEAQLEQPQ) shows a compositional bias: low complexity.

Belongs to the protein kinase superfamily. Tyr protein kinase family. CSF-1/PDGF receptor subfamily. As to quaternary structure, interacts with homodimeric PDGFB and PDGFD, and with heterodimers formed by PDGFA and PDGFB. May also interact with homodimeric PDGFC. Monomer in the absence of bound ligand. Interaction with homodimeric PDGFB, heterodimers formed by PDGFA and PDGFB or homodimeric PDGFD, leads to receptor dimerization, where both PDGFRA homodimers and heterodimers with PDGFRB are observed. Interacts with SH2B2/APS. Interacts directly (tyrosine phosphorylated) with SHB. Interacts (tyrosine phosphorylated) with PIK3R1 and RASA1. Interacts (tyrosine phosphorylated) with CBL. Interacts (tyrosine phosphorylated) with SRC and SRC family kinases. Interacts (tyrosine phosphorylated) with PIK3C2B, maybe indirectly. Interacts (tyrosine phosphorylated) with SHC1, GRB7, GRB10 and NCK1. Interaction with GRB2 is mediated by SHC1. Interacts (via C-terminus) with NHERF1. N-glycosylated. In terms of processing, ubiquitinated. After autophosphorylation, the receptor is polyubiquitinated, leading to its degradation. Post-translationally, autophosphorylated on tyrosine residues upon ligand binding. Autophosphorylation occurs in trans, i.e. one subunit of the dimeric receptor phosphorylates tyrosine residues on the other subunit. Phosphorylation at Tyr-578, and to a lesser degree, Tyr-580 is important for interaction with SRC. Phosphorylation at Tyr-715 is important for interaction with GRB2. Phosphorylation at Tyr-739 and Tyr-750 is important for interaction with PIK3R1. Phosphorylation at Tyr-750 is important for interaction with NCK1. Phosphorylation at Tyr-770 and Tyr-856 is important for interaction with RASA1/GAP. Phosphorylation at Tyr-856 is important for efficient phosphorylation of PLCG1 and PTPN11, resulting in increased phosphorylation of AKT1, MAPK1/ERK2 and/or MAPK3/ERK1, PDCD6IP/ALIX and STAM, and in increased cell proliferation. Phosphorylation at Tyr-1008 is important for interaction with PTPN11. Phosphorylation at Tyr-1008 and Tyr-1020 is important for interaction with PLCG1. Dephosphorylated by PTPRJ at Tyr-750, Tyr-856, Tyr-1008 and Tyr-1020. Dephosphorylated by PTPN2 at Tyr-578 and Tyr-1020.

It localises to the cell membrane. Its subcellular location is the cytoplasmic vesicle. It is found in the lysosome lumen. The enzyme catalyses L-tyrosyl-[protein] + ATP = O-phospho-L-tyrosyl-[protein] + ADP + H(+). Its activity is regulated as follows. Present in an inactive conformation in the absence of bound ligand. Binding of PDGFB and/or PDGFD leads to dimerization and activation by autophosphorylation on tyrosine residues. Functionally, tyrosine-protein kinase that acts as a cell-surface receptor for homodimeric PDGFB and PDGFD and for heterodimers formed by PDGFA and PDGFB, and plays an essential role in the regulation of embryonic development, cell proliferation, survival, differentiation, chemotaxis and migration. Plays an essential role in blood vessel development by promoting proliferation, migration and recruitment of pericytes and smooth muscle cells to endothelial cells. Plays a role in the migration of vascular smooth muscle cells and the formation of neointima at vascular injury sites. Required for normal development of the cardiovascular system. Required for normal recruitment of pericytes (mesangial cells) in the kidney glomerulus, and for normal formation of a branched network of capillaries in kidney glomeruli. Promotes rearrangement of the actin cytoskeleton and the formation of membrane ruffles. Binding of its cognate ligands - homodimeric PDGFB, heterodimers formed by PDGFA and PDGFB or homodimeric PDGFD -leads to the activation of several signaling cascades; the response depends on the nature of the bound ligand and is modulated by the formation of heterodimers between PDGFRA and PDGFRB. Phosphorylates PLCG1, PIK3R1, PTPN11, RASA1/GAP, CBL, SHC1 and NCK1. Activation of PLCG1 leads to the production of the cellular signaling molecules diacylglycerol and inositol 1,4,5-trisphosphate, mobilization of cytosolic Ca(2+) and the activation of protein kinase C. Phosphorylation of PIK3R1, the regulatory subunit of phosphatidylinositol 3-kinase, leads to the activation of the AKT1 signaling pathway. Phosphorylation of SHC1, or of the C-terminus of PTPN11, creates a binding site for GRB2, resulting in the activation of HRAS, RAF1 and down-stream MAP kinases, including MAPK1/ERK2 and/or MAPK3/ERK1. Promotes phosphorylation and activation of SRC family kinases. Promotes phosphorylation of PDCD6IP/ALIX and STAM. Receptor signaling is down-regulated by protein phosphatases that dephosphorylate the receptor and its down-stream effectors, and by rapid internalization of the activated receptor. The polypeptide is Platelet-derived growth factor receptor beta (Pdgfrb) (Rattus norvegicus (Rat)).